Reading from the N-terminus, the 348-residue chain is S-adenosyl-L-methionine-dependent methyl transferase PigF (348 aa).

Position 199 (Glu199) interacts with S-adenosyl-L-methionine. His247 acts as the Proton acceptor in catalysis.

The protein belongs to the class I-like SAM-binding methyltransferase superfamily. Cation-independent O-methyltransferase family.

The protein operates within antibiotic biosynthesis; prodigiosin biosynthesis. Its function is as follows. Involved in the biosynthesis of 4-methoxy-2,2'-bipyrrole-5-carbaldehyde (MBC), one of the terminal products involved in the biosynthesis of the red antibiotic prodigiosin (Pig). Catalyzes the transfer of a methyl group from S-adenosyl-L-methionine (SAM) to the hydroxyl group of 4-hydroxy-2,2'-bipyrrole-5-carbaldehyde (HBC) to yield 4-methoxy-2,2'-bipyrrole-5-carbaldehyde (MBC). The polypeptide is S-adenosyl-L-methionine-dependent methyl transferase PigF (Serratia sp. (strain ATCC 39006) (Prodigiosinella confusarubida)).